The following is a 76-amino-acid chain: UPF0291 protein GK1331 (76 aa).

The interval P57–H76 is disordered. Positions T63–H76 are enriched in basic and acidic residues.

Belongs to the UPF0291 family.

The protein resides in the cytoplasm. This chain is UPF0291 protein GK1331, found in Geobacillus kaustophilus (strain HTA426).